The following is a 242-amino-acid chain: Segregation and condensation protein A (242 aa).

Belongs to the ScpA family. Component of a cohesin-like complex composed of ScpA, ScpB and the Smc homodimer, in which ScpA and ScpB bind to the head domain of Smc. The presence of the three proteins is required for the association of the complex with DNA.

Its subcellular location is the cytoplasm. Its function is as follows. Participates in chromosomal partition during cell division. May act via the formation of a condensin-like complex containing Smc and ScpB that pull DNA away from mid-cell into both cell halves. The chain is Segregation and condensation protein A from Lactococcus lactis subsp. cremoris (strain SK11).